Reading from the N-terminus, the 308-residue chain is NAD kinase (308 aa).

Aspartate 86 serves as the catalytic Proton acceptor. NAD(+) is bound by residues 86–87 (DG), arginine 91, 160–161 (NE), aspartate 190, and 201–206 (TAYAFS).

The protein belongs to the NAD kinase family. It depends on a divalent metal cation as a cofactor.

It is found in the cytoplasm. It carries out the reaction NAD(+) + ATP = ADP + NADP(+) + H(+). Involved in the regulation of the intracellular balance of NAD and NADP, and is a key enzyme in the biosynthesis of NADP. Catalyzes specifically the phosphorylation on 2'-hydroxyl of the adenosine moiety of NAD to yield NADP. The sequence is that of NAD kinase from Mycolicibacterium paratuberculosis (strain ATCC BAA-968 / K-10) (Mycobacterium paratuberculosis).